We begin with the raw amino-acid sequence, 160 residues long: MRIGIVAVGRLKAGPEKDLVSRYLDRFAKAGPASGLEFSRVNELPESRASNSATRKREEAVQIEKSLPDNPLVVALDERGKSWDSQEFATYVGDHKDRGRRDMVIVIGGADGLDPDFRDRADLVLNLGKMTWPHQLVRIMLAEQLYRAVTILSGHPYHRS.

The interval 44–63 (LPESRASNSATRKREEAVQI) is disordered. S-adenosyl-L-methionine is bound by residues leucine 76, glycine 108, and 127–132 (LGKMTW).

Belongs to the RNA methyltransferase RlmH family. In terms of assembly, homodimer.

Its subcellular location is the cytoplasm. It carries out the reaction pseudouridine(1915) in 23S rRNA + S-adenosyl-L-methionine = N(3)-methylpseudouridine(1915) in 23S rRNA + S-adenosyl-L-homocysteine + H(+). Functionally, specifically methylates the pseudouridine at position 1915 (m3Psi1915) in 23S rRNA. The polypeptide is Ribosomal RNA large subunit methyltransferase H (Allorhizobium ampelinum (strain ATCC BAA-846 / DSM 112012 / S4) (Agrobacterium vitis (strain S4))).